The chain runs to 1028 residues: Beta-galactosidase (1028 aa).

Substrate-binding residues include Asn-104 and Asp-203. Asp-203 is a binding site for Na(+). Mg(2+) is bound by residues Glu-418, His-420, and Glu-463. Residues Glu-463 and 539-542 (EYAH) contribute to the substrate site. Glu-463 (proton donor) is an active-site residue. Glu-539 functions as the Nucleophile in the catalytic mechanism. Residue Asn-599 participates in Mg(2+) binding. Residues Phe-603 and Asn-606 each contribute to the Na(+) site. Asn-606 and Trp-1004 together coordinate substrate.

It belongs to the glycosyl hydrolase 2 family. As to quaternary structure, homotetramer. The cofactor is Mg(2+). Na(+) is required as a cofactor.

The catalysed reaction is Hydrolysis of terminal non-reducing beta-D-galactose residues in beta-D-galactosides.. This is Beta-galactosidase from Enterobacter sp. (strain 638).